A 133-amino-acid polypeptide reads, in one-letter code: MGLTSQLIPTLVCLLACTSNFVHGHKCDITLQEIIKTLNILTARKNSCMELPVTDVFAAPENTTEKETFCRASTVLRHIYRHHTCMKSLLSGLDRNLSSMANMTCSVHEAKKSTLKDFLERLKTIMKEKYSKC.

The first 24 residues, 1–24 (MGLTSQLIPTLVCLLACTSNFVHG), serve as a signal peptide directing secretion. 3 disulfides stabilise this stretch: Cys-27–Cys-133, Cys-48–Cys-85, and Cys-70–Cys-105. The N-linked (GlcNAc...) asparagine glycan is linked to Asn-62.

The protein belongs to the IL-4/IL-13 family.

It localises to the secreted. Functionally, participates in at least several B-cell activation processes as well as of other cell types. It is a costimulator of DNA-synthesis. It induces the expression of class II MHC molecules on resting B-cells. It enhances both secretion and cell surface expression of IgE and IgG1. It also regulates the expression of the low affinity Fc receptor for IgE (CD23) on both lymphocytes and monocytes. Positively regulates IL31RA expression in macrophages. Stimulates autophagy in dendritic cells by interfering with mTORC1 signaling and through the induction of RUFY4. This is Interleukin-4 (IL4) from Sus scrofa (Pig).